Here is a 93-residue protein sequence, read N- to C-terminus: MSTETLERKSVQRKPMPLYKVLLHNDDHTPMNYVIEVLMKTIPKMQPSKARKIMLEAHNGGVAVVIVCALEHAEFYSESLNRHNLTSTYEPDC.

The protein belongs to the ClpS family. In terms of assembly, binds to the N-terminal domain of the chaperone ClpA.

In terms of biological role, involved in the modulation of the specificity of the ClpAP-mediated ATP-dependent protein degradation. This is ATP-dependent Clp protease adapter protein ClpS from Gloeobacter violaceus (strain ATCC 29082 / PCC 7421).